Consider the following 174-residue polypeptide: Ribosome rescue factor SmrB (174 aa).

Positions 96–171 constitute a Smr domain; sequence LDLHGLTQQQ…GDAAILVLIE (76 aa).

The protein belongs to the SmrB family. As to quaternary structure, associates with collided ribosomes, but not with correctly translating polysomes.

Functionally, acts as a ribosome collision sensor. Detects stalled/collided disomes (pairs of ribosomes where the leading ribosome is stalled and a second ribosome has collided with it) and endonucleolytically cleaves mRNA at the 5' boundary of the stalled ribosome. Stalled/collided disomes form a new interface (primarily via the 30S subunits) that binds SmrB. Cleaved mRNA becomes available for tmRNA ligation, leading to ribosomal subunit dissociation and rescue of stalled ribosomes. The sequence is that of Ribosome rescue factor SmrB from Tolumonas auensis (strain DSM 9187 / NBRC 110442 / TA 4).